An 80-amino-acid chain; its full sequence is LSM complex subunit lsm5 (80 aa).

The Sm domain maps to leucine 6–proline 79.

The protein belongs to the snRNP Sm proteins family. In terms of assembly, component of the heptameric LSM1-LSM7 complex that forms a seven-membered ring structure with a donut shape. The LSm subunits are arranged in the order lsm1, lsm2, lsm3, lsm6, lsm5, lsm7 and lsm4. Component of the heptameric LSM2-LSM8 complex that forms a seven-membered ring structure with a donut shape. The LSm subunits are arranged in the order lsm8, lsm2, lsm3, lsm6, lsm5, lsm7 and lsm4.

It is found in the nucleus. In terms of biological role, component of LSm protein complexes, which are involved in RNA processing and may function in a chaperone-like manner. Component of the cytoplasmic LSM1-LSM7 complex which is involved in mRNA degradation by activating the decapping step. The LSM1-LSM7 complex loads onto the 3'-end of single stranded RNA. Component of the nuclear LSM2-LSM8 complex, which is involved in spliceosome assembly. The LSM2-LSM8 complex plays a role in the biogenesis of the spliceosomal U4/U6-U5 tri-snRNP complex by accelerating prp24-mediated annealing of U4/U6 di-snRNA. The LSM2-LSM8 complex binds U6 snRNA terminating with a cyclic 2',3' phosphate group; RNA with an unmodified 3' hydroxyl or non-cyclic 3' phosphate is bound less tightly. This is LSM complex subunit lsm5 (lsm5) from Schizosaccharomyces pombe (strain 972 / ATCC 24843) (Fission yeast).